The sequence spans 324 residues: Probable cell division protein WhiA (324 aa).

Positions 276 to 310 (TLKELGEMMQGGKVSKSGINHRLRKIDEFADKLRN) form a DNA-binding region, H-T-H motif.

The protein belongs to the WhiA family.

Functionally, involved in cell division and chromosome segregation. This chain is Probable cell division protein WhiA, found in Shouchella clausii (strain KSM-K16) (Alkalihalobacillus clausii).